A 190-amino-acid chain; its full sequence is Guanylate kinase (190 aa).

One can recognise a Guanylate kinase-like domain in the interval 8 to 188; the sequence is GRLVILAGPS…AVSAIKAVLL (181 aa). An ATP-binding site is contributed by 15-22; sequence GPSAVGKS.

This sequence belongs to the guanylate kinase family.

Its subcellular location is the cytoplasm. The catalysed reaction is GMP + ATP = GDP + ADP. Its function is as follows. Essential for recycling GMP and indirectly, cGMP. In Corynebacterium efficiens (strain DSM 44549 / YS-314 / AJ 12310 / JCM 11189 / NBRC 100395), this protein is Guanylate kinase.